Reading from the N-terminus, the 296-residue chain is Ribosomal RNA small subunit methyltransferase A (296 aa).

S-adenosyl-L-methionine is bound by residues Asn32, Leu34, Gly59, Glu80, Asp105, and Asn130.

Belongs to the class I-like SAM-binding methyltransferase superfamily. rRNA adenine N(6)-methyltransferase family. RsmA subfamily.

The protein localises to the cytoplasm. It carries out the reaction adenosine(1518)/adenosine(1519) in 16S rRNA + 4 S-adenosyl-L-methionine = N(6)-dimethyladenosine(1518)/N(6)-dimethyladenosine(1519) in 16S rRNA + 4 S-adenosyl-L-homocysteine + 4 H(+). Its function is as follows. Specifically dimethylates two adjacent adenosines (A1518 and A1519) in the loop of a conserved hairpin near the 3'-end of 16S rRNA in the 30S particle. May play a critical role in biogenesis of 30S subunits. This chain is Ribosomal RNA small subunit methyltransferase A, found in Levilactobacillus brevis (strain ATCC 367 / BCRC 12310 / CIP 105137 / JCM 1170 / LMG 11437 / NCIMB 947 / NCTC 947) (Lactobacillus brevis).